The chain runs to 752 residues: Two pore channel protein 2 (752 aa).

Topologically, residues 1 to 84 (MAEPQAESEP…RRYYSNVCQR (84 aa)) are cytoplasmic. A helical membrane pass occupies residues 85-105 (TLSFTIFLILFLAFIETPSSL). At 106–127 (TSTADVRYRAAPWEPPCGLTES) the chain is on the extracellular side. The helical transmembrane segment at 128–148 (VEVLCLLVFAADLSVKGYLFG) threads the bilayer. At 149 to 155 (WAHFQKN) the chain is on the cytoplasmic side. Residues 156 to 176 (LWLLGYLVVLVVSLVDWTVSL) traverse the membrane as a helical segment. At 177 to 183 (SLVCHEP) the chain is on the extracellular side. A helical transmembrane segment spans residues 184–204 (LRIRRLLRPFFLLQNSSMMKK). Residues 203 to 207 (KKTLK) form an interaction with phosphatidylinositol 3,5-bisphosphate region. Over 205–218 (TLKCIRWSLPEMAS) the chain is Cytoplasmic. Residues 219-239 (VGLLLAIHLCLFTMFGMLLFA) traverse the membrane as a helical segment. Residues 240–254 (GGKQDDGQDRERLTY) are Extracellular-facing. The helical; Pore-forming intramembrane region spans 255-279 (FQNLPESLTSLLVLLTTANNPDVMI). The Extracellular portion of the chain corresponds to 280–289 (PAYSKNRAYA). A helical transmembrane segment spans residues 290 to 310 (IFFIVFTVIGSLFLMNLLTAI). Residues 311-436 (IYSQFRGYLM…FLFGHYYFDY (126 aa)) lie on the Cytoplasmic side of the membrane. Residues 437–459 (LGNLIALANLVSICVFLVLDADV) traverse the membrane as a helical segment. Residues 460–465 (LPAERD) are Extracellular-facing. Residues 466–486 (DFILGILNCVFIVYYLLEMLL) traverse the membrane as a helical segment. Residues 487–502 (KVFALGLRGYLSYPSN) are Cytoplasmic-facing. A helical membrane pass occupies residues 503–523 (VFDGLLTVVLLVLEISTLAVY). Topologically, residues 524-554 (RLPHPGWRPEMVGLLSLWDMTRMLNMLIVFR) are extracellular. A helical membrane pass occupies residues 555-575 (FLRIIPSMKLMAVVASTVLGL). The Cytoplasmic portion of the chain corresponds to 576-580 (VQNMR). The helical transmembrane segment at 581 to 601 (AFGGILVVVYYVFAIIGINLF) threads the bilayer. The Extracellular segment spans residues 602–635 (RGVIVALPGNSSLAPANGSAPCGSFEQLEYWANN). N-linked (GlcNAc...) asparagine glycans are attached at residues asparagine 611 and asparagine 618. An intramembrane region (helical; Pore-forming) is located at residues 636–658 (FDDFAAALVTLWNLMVVNNWQVF). Topologically, residues 659 to 673 (LDAYRRYSGPWSKIY) are extracellular. A helical membrane pass occupies residues 674 to 694 (FVLWWLVSSVIWVNLFLALIL). The Cytoplasmic portion of the chain corresponds to 695 to 752 (ENFLHKWDPRSHLQPLAGTPEATYQMTVELLFRDILEEPGEDELTERLSQHPHLWLCR).

It belongs to the calcium channel alpha-1 subunit (TC 1.A.1.11) family. Two pore calcium channel subfamily. In terms of assembly, homodimer. Interacts with LRRK2. Interacts with HAX1. Interacts with MTOR; the interaction is required for TPCN2 ATP sensitivity. Found in a complex with LSM12, TPCN1 and TPCN2. Interacts with LSM12. In terms of processing, N-glycosylated. In terms of tissue distribution, widely expressed. Expressed at high level in liver and kidney.

The protein resides in the late endosome membrane. Its subcellular location is the lysosome membrane. The protein localises to the melanosome membrane. The catalysed reaction is Na(+)(in) = Na(+)(out). It catalyses the reaction Ca(2+)(in) = Ca(2+)(out). Its activity is regulated as follows. Regulated by Mg(2+) ions, cytosolic Mg(2+) selectively inhibits outward current while lysosomal Mg(2+) modestly inhibits both the outward and inward currents. In the absence of Mg(2+), NAADP readily activates TPCN2, with properties similar to PI(3,5)P2. Na(+) current is inhibited by ATP in a MTORC-dependent manner. ATP sensitivity is independent of PI(3,5)P2. Both current elicited by PI(3,5)P2 as well as NAADP are inhibited by tetrandrine. Intracellular channel initially characterized as a non-selective Ca(2+)-permeable channel activated by NAADP (nicotinic acid adenine dinucleotide phosphate), it is also a highly-selective Na(+) channel activated directly by PI(3,5)P2 (phosphatidylinositol 3,5-bisphosphate). Localizes to the lysosomal and late endosome membranes where it regulates organellar membrane excitability, membrane trafficking, and pH homeostasis. Is associated with a plethora of physiological processes, including mTOR-dependent nutrient sensing, skin pigmentation and autophagy. Ion selectivity is not fixed but rather agonist-dependent and under defined ionic conditions, can be readily activated by both NAADP and PI(3,5)P2. As calcium channel, it increases the pH in the lysosomal lumen, as sodium channel, it promotes lysosomal exocytosis. Plays a crucial role in endolysosomal trafficking in the endolysosomal degradation pathway and is potentially involved in the homeostatic control of many macromolecules and cell metabolites. Also expressed in melanosomes of pigmented cells where mediates a Ca(2+) channel and/or PI(3,5)P2-activated melanosomal Na(+) channel to acidify pH and inhibit tyrosinase activity required for melanogenesis and pigmentation. Unlike the voltage-dependent TPCN1, TPCN2 is voltage independent and can be activated solely by PI(3,5)P2 binding. In contrast, PI(4,5)P2, PI(3,4)P2, PI(3)P and PI(5)P have no obvious effect on channel activation. Functionally, (Microbial infection) During Ebola virus (EBOV) infection, controls the movement of endosomes containing virus particles and is required by EBOV to escape from the endosomal network into the cell cytoplasm. Its function is as follows. (Microbial infection) Required for cell entry of coronaviruses SARS-CoV and SARS-CoV-2, as well as human coronavirus EMC (HCoV-EMC), by endocytosis. The protein is Two pore channel protein 2 of Homo sapiens (Human).